We begin with the raw amino-acid sequence, 128 residues long: uncharacterized protein (128 aa).

A signal peptide spans 1–24 (MKMTKLTTLLLTATLGLASGAALA). Low complexity-rich tracts occupy residues 24 to 44 (AAES…NAGQ) and 52 to 70 (NVAP…GNTN). Positions 24-128 (AAESNAQSSN…VNTKTDGTTQ (105 aa)) are disordered. Positions 71–82 (STMQHPDGSTMN) are enriched in polar residues. Residues 85–110 (GMTKDEEHKNTMCKDGRCPDINKKVE) are compositionally biased toward basic and acidic residues. The span at 113–128 (NGVNNDVNTKTDGTTQ) shows a compositional bias: polar residues.

This is an uncharacterized protein from Salmonella typhi.